Reading from the N-terminus, the 475-residue chain is FAD-dependent monooxygenase janM (475 aa).

Residues 8-24 traverse the membrane as a helical segment; sequence VIIVGGSIGGLTLAHCL. Residues E35, G49, and R108 each contribute to the FAD site. N-linked (GlcNAc...) asparagine glycosylation is present at N147. Residues D299 and A312 each contribute to the FAD site. A helical transmembrane segment spans residues 432 to 451; it reads GWRFHAMLCILMLAILYTWV.

This sequence belongs to the paxM FAD-dependent monooxygenase family. FAD is required as a cofactor.

Its subcellular location is the membrane. It functions in the pathway secondary metabolite biosynthesis. Functionally, FAD-dependent monooxygenase; part of the gene cluster that mediates the biosynthesis of the indole diterpenes janthitremanes such as shearinine K or shearinine A. The geranylgeranyl diphosphate (GGPP) synthase janG catalyzes the first step in janthitremane biosynthesis via conversion of farnesyl pyrophosphate and isopentyl pyrophosphate into geranylgeranyl pyrophosphate (GGPP). Condensation of indole-3-glycerol phosphate with GGPP by the prenyl transferase janC then forms 3-geranylgeranylindole (3-GGI). Epoxidation by the FAD-dependent monooxygenase janM leads to a epoxidized-GGI that is substrate of the terpene cyclase janB for cyclization to yield paspaline. Paspaline is subsequently converted to 13-desoxypaspaline by the cytochrome P450 monooxygenase janP, via beta-PC-M6 in a series of alpha-face oxidations. The cytochrome P450 monooxygenase janQ is proposed to carry out sequential beta-face oxidation steps at C-7 and C-13 of 13-desoxypaspaline to form paspalicine and paspalinine respectively. The indole diterpene prenyltransferase janD may then convert paspalinine into shearinine K which is substrate of janO and/or additional enzymes for oxidation and cyclization to generate shearinine A. The polypeptide is FAD-dependent monooxygenase janM (Penicillium janthinellum (Penicillium vitale)).